The sequence spans 313 residues: Curved DNA-binding protein (313 aa).

One can recognise a J domain in the interval 5-69 (DYYKILGVSR…EKRKAYDAIG (65 aa)). Residues 71–93 (GWKQGQGFTPPPGWESRPGGEGV) form a disordered region.

It is found in the cytoplasm. Its subcellular location is the nucleoid. DNA-binding protein that preferentially recognizes a curved DNA sequence. It is probably a functional analog of DnaJ; displays overlapping activities with DnaJ, but functions under different conditions, probably acting as a molecular chaperone in an adaptive response to environmental stresses other than heat shock. Lacks autonomous chaperone activity; binds native substrates and targets them for recognition by DnaK. Its activity is inhibited by the binding of CbpM. This chain is Curved DNA-binding protein, found in Coxiella burnetii (strain Dugway 5J108-111).